The sequence spans 466 residues: Putative multidrug resistance protein MdtD (466 aa).

A run of 14 helical transmembrane segments spans residues 11–31, 48–68, 71–91, 105–125, 137–157, 164–184, 194–214, 218–238, 262–282, 286–306, 328–347, 351–370, 403–423, and 429–449; these read LWIV…VNTA, SVIV…GWLA, IGVK…SLLC, VIQG…VMKI, FVTL…GFLV, WIFL…WFLM, FDIS…LALD, SLGI…IALL, FSIG…LPFM, FLQL…VPMV, VLIV…ALVA, WIWM…AIRF, LGVS…MAAG, and MVFI…ALIF.

The protein belongs to the major facilitator superfamily. TCR/Tet family.

Its subcellular location is the cell inner membrane. The chain is Putative multidrug resistance protein MdtD from Pectobacterium carotovorum subsp. carotovorum (strain PC1).